Reading from the N-terminus, the 390-residue chain is Manganese peroxidase 2 (390 aa).

The N-terminal stretch at 1–23 (MAFNFAAILAFVSLAAVTSAAPS) is a signal peptide. 5 disulfide bridges follow: C27–C39, C38–C313, C57–C141, C277–C343, and C365–C372. Residues E59 and E63 each coordinate Mn(2+). Catalysis depends on H70, which acts as the Proton acceptor. Ca(2+) is bound by residues D71, G86, D88, and S90. N155 carries an N-linked (GlcNAc...) asparagine glycan. Heme b is bound at residue H197. S198 provides a ligand contact to Ca(2+). D203 contacts Mn(2+). D215, T217, and D222 together coordinate Ca(2+). N241 carries N-linked (GlcNAc...) asparagine glycosylation.

Belongs to the peroxidase family. Ligninase subfamily. Requires heme b as cofactor. The cofactor is Ca(2+).

It localises to the secreted. It carries out the reaction 2 Mn(2+) + H2O2 + 2 H(+) = 2 Mn(3+) + 2 H2O. Catalyzes the oxidation of Mn(2+) to Mn(3+). The latter, acting as a diffusible redox mediator, is capable of oxidizing a variety of lignin compounds. The polypeptide is Manganese peroxidase 2 (mnp2) (Phlebia radiata (White-rot fungus)).